The primary structure comprises 485 residues: Glutamyl-tRNA(Gln) amidotransferase subunit A (485 aa).

Catalysis depends on charge relay system residues lysine 78 and serine 153. The active-site Acyl-ester intermediate is the serine 177.

Belongs to the amidase family. GatA subfamily. In terms of assembly, heterotrimer of A, B and C subunits.

It carries out the reaction L-glutamyl-tRNA(Gln) + L-glutamine + ATP + H2O = L-glutaminyl-tRNA(Gln) + L-glutamate + ADP + phosphate + H(+). Allows the formation of correctly charged Gln-tRNA(Gln) through the transamidation of misacylated Glu-tRNA(Gln) in organisms which lack glutaminyl-tRNA synthetase. The reaction takes place in the presence of glutamine and ATP through an activated gamma-phospho-Glu-tRNA(Gln). The protein is Glutamyl-tRNA(Gln) amidotransferase subunit A of Geobacter metallireducens (strain ATCC 53774 / DSM 7210 / GS-15).